Here is a 669-residue protein sequence, read N- to C-terminus: GTP-binding protein 1 (669 aa).

Positions 1 to 32 (MAAERSRSPVDSPVPASMFAPEPSSPGAARAA) are disordered. Phosphoserine is present on residues serine 6, serine 8, serine 12, serine 24, serine 25, serine 44, serine 47, and serine 69. One can recognise a tr-type G domain in the interval 158–389 (FLEVRVAVVG…LNLLSPRTSY (232 aa)). Residues 167–174 (GNVDAGKS) are G1. 167 to 174 (GNVDAGKS) is a binding site for GTP. Residues 206-210 (GRTSS) are G2. The tract at residues 252-255 (DLAG) is G3. GTP contacts are provided by residues 252-256 (DLAGH) and 308-311 (TKID). The segment at 308–311 (TKID) is G4. The tract at residues 366 to 368 (SNV) is G5. 2 stretches are compositionally biased toward polar residues: residues 573 to 595 (LLQT…QSTK) and 620 to 637 (DEAS…SGLQ). The segment at 573–669 (LLQTTNNSPM…GACVTPASGC (97 aa)) is disordered. Phosphoserine is present on serine 580. Basic residues predominate over residues 646 to 657 (GRRRGGQRHKVK).

This sequence belongs to the TRAFAC class translation factor GTPase superfamily. Classic translation factor GTPase family. GTPBP1 subfamily. As to quaternary structure, interacts with EXOSC2/RRP4, EXOSC3/RRP40, EXOSC5/RRP46, HNRNPD, HNRNPR and SYNCRIP. Identified in a complex with HNRNPD, HNRNPL, HNRNPQ, HNRNPR, HNRNPU and AANAT mRNA, but does not bind mRNA by itself. As to expression, detected in pineal gland (at protein level).

It is found in the cytoplasm. Functionally, promotes degradation of target mRNA species. Plays a role in the regulation of circadian mRNA stability. Binds GTP and has GTPase activity. The protein is GTP-binding protein 1 (Gtpbp1) of Rattus norvegicus (Rat).